Here is a 21-residue protein sequence, read N- to C-terminus: Basic phospholipase A2 BjIV (21 aa).

This sequence belongs to the phospholipase A2 family. Group II subfamily. Can form dimers, trimers and tetramers. It depends on Ca(2+) as a cofactor. In terms of processing, contains seven disulfide bonds. Expressed by the venom gland.

Its subcellular location is the secreted. It carries out the reaction a 1,2-diacyl-sn-glycero-3-phosphocholine + H2O = a 1-acyl-sn-glycero-3-phosphocholine + a fatty acid + H(+). Its activity is regulated as follows. Inhibited by crotapotin. Snake venom phospholipase A2 has a high enzymatic activity and produces moderate myonecrosis in skeletal muscle, but shows no neuromuscular activity in mouse phrenic nerve-diaphragm preparations. PLA2 catalyzes the calcium-dependent hydrolysis of the 2-acyl groups in 3-sn-phosphoglycerides. This is Basic phospholipase A2 BjIV from Bothrops jararacussu (Jararacussu).